Reading from the N-terminus, the 282-residue chain is Probable septum site-determining protein MinC (282 aa).

Positions 108-127 are disordered; it reads AAARSADEESANAAAAAPAA. Low complexity predominate over residues 118 to 127; that stretch reads ANAAAAAPAA.

It belongs to the MinC family. As to quaternary structure, interacts with MinD and FtsZ.

In terms of biological role, cell division inhibitor that blocks the formation of polar Z ring septums. Rapidly oscillates between the poles of the cell to destabilize FtsZ filaments that have formed before they mature into polar Z rings. Prevents FtsZ polymerization. In Paraburkholderia xenovorans (strain LB400), this protein is Probable septum site-determining protein MinC.